We begin with the raw amino-acid sequence, 225 residues long: NAD(P)H-quinone oxidoreductase subunit K, chloroplastic (225 aa).

[4Fe-4S] cluster is bound by residues C43, C44, C108, and C139.

This sequence belongs to the complex I 20 kDa subunit family. In terms of assembly, NDH is composed of at least 16 different subunits, 5 of which are encoded in the nucleus. [4Fe-4S] cluster serves as cofactor.

Its subcellular location is the plastid. The protein localises to the chloroplast thylakoid membrane. It catalyses the reaction a plastoquinone + NADH + (n+1) H(+)(in) = a plastoquinol + NAD(+) + n H(+)(out). It carries out the reaction a plastoquinone + NADPH + (n+1) H(+)(in) = a plastoquinol + NADP(+) + n H(+)(out). NDH shuttles electrons from NAD(P)H:plastoquinone, via FMN and iron-sulfur (Fe-S) centers, to quinones in the photosynthetic chain and possibly in a chloroplast respiratory chain. The immediate electron acceptor for the enzyme in this species is believed to be plastoquinone. Couples the redox reaction to proton translocation, and thus conserves the redox energy in a proton gradient. This is NAD(P)H-quinone oxidoreductase subunit K, chloroplastic from Oryza nivara (Indian wild rice).